Consider the following 737-residue polypeptide: Phosphoribosylformylglycinamidine synthase subunit PurL (737 aa).

His-48 is an active-site residue. ATP contacts are provided by Tyr-51 and Lys-90. A Mg(2+)-binding site is contributed by Glu-92. Substrate is bound by residues 93 to 96 (SHNH) and Arg-115. Residue His-94 is the Proton acceptor of the active site. Residue Asp-116 coordinates Mg(2+). Gln-244 provides a ligand contact to substrate. Asp-272 lines the Mg(2+) pocket. 316–318 (ESQ) is a binding site for substrate. ATP is bound by residues Asp-500 and Gly-537. Asn-538 serves as a coordination point for Mg(2+). Ser-540 contributes to the substrate binding site.

Belongs to the FGAMS family. As to quaternary structure, monomer. Part of the FGAM synthase complex composed of 1 PurL, 1 PurQ and 2 PurS subunits.

It localises to the cytoplasm. It catalyses the reaction N(2)-formyl-N(1)-(5-phospho-beta-D-ribosyl)glycinamide + L-glutamine + ATP + H2O = 2-formamido-N(1)-(5-O-phospho-beta-D-ribosyl)acetamidine + L-glutamate + ADP + phosphate + H(+). It functions in the pathway purine metabolism; IMP biosynthesis via de novo pathway; 5-amino-1-(5-phospho-D-ribosyl)imidazole from N(2)-formyl-N(1)-(5-phospho-D-ribosyl)glycinamide: step 1/2. Its function is as follows. Part of the phosphoribosylformylglycinamidine synthase complex involved in the purines biosynthetic pathway. Catalyzes the ATP-dependent conversion of formylglycinamide ribonucleotide (FGAR) and glutamine to yield formylglycinamidine ribonucleotide (FGAM) and glutamate. The FGAM synthase complex is composed of three subunits. PurQ produces an ammonia molecule by converting glutamine to glutamate. PurL transfers the ammonia molecule to FGAR to form FGAM in an ATP-dependent manner. PurS interacts with PurQ and PurL and is thought to assist in the transfer of the ammonia molecule from PurQ to PurL. The protein is Phosphoribosylformylglycinamidine synthase subunit PurL of Sulfurimonas denitrificans (strain ATCC 33889 / DSM 1251) (Thiomicrospira denitrificans (strain ATCC 33889 / DSM 1251)).